A 252-amino-acid chain; its full sequence is Imidazole glycerol phosphate synthase subunit HisF (252 aa).

Active-site residues include aspartate 11 and aspartate 130.

Belongs to the HisA/HisF family. As to quaternary structure, heterodimer of HisH and HisF.

It is found in the cytoplasm. It catalyses the reaction 5-[(5-phospho-1-deoxy-D-ribulos-1-ylimino)methylamino]-1-(5-phospho-beta-D-ribosyl)imidazole-4-carboxamide + L-glutamine = D-erythro-1-(imidazol-4-yl)glycerol 3-phosphate + 5-amino-1-(5-phospho-beta-D-ribosyl)imidazole-4-carboxamide + L-glutamate + H(+). It functions in the pathway amino-acid biosynthesis; L-histidine biosynthesis; L-histidine from 5-phospho-alpha-D-ribose 1-diphosphate: step 5/9. Its function is as follows. IGPS catalyzes the conversion of PRFAR and glutamine to IGP, AICAR and glutamate. The HisF subunit catalyzes the cyclization activity that produces IGP and AICAR from PRFAR using the ammonia provided by the HisH subunit. The protein is Imidazole glycerol phosphate synthase subunit HisF of Bacillus cereus (strain AH187).